The chain runs to 452 residues: Tubulin alpha-1 chain (452 aa).

Glutamine 11 is a GTP binding site. Lysine 40 carries the post-translational modification N6-acetyllysine. Residues glutamate 71, glycine 144, threonine 145, threonine 179, asparagine 206, and asparagine 228 each contribute to the GTP site. Glutamate 71 provides a ligand contact to Mg(2+). The active site involves glutamate 254. The segment at 430–452 (KDYEEVGAESGDGDDDGLGEEEY) is disordered. Positions 431–452 (DYEEVGAESGDGDDDGLGEEEY) are enriched in acidic residues.

Belongs to the tubulin family. Dimer of alpha and beta chains. A typical microtubule is a hollow water-filled tube with an outer diameter of 25 nm and an inner diameter of 15 nM. Alpha-beta heterodimers associate head-to-tail to form protofilaments running lengthwise along the microtubule wall with the beta-tubulin subunit facing the microtubule plus end conferring a structural polarity. Microtubules usually have 13 protofilaments but different protofilament numbers can be found in some organisms and specialized cells. Mg(2+) is required as a cofactor. Post-translationally, undergoes a tyrosination/detyrosination cycle, the cyclic removal and re-addition of a C-terminal tyrosine residue by the enzymes tubulin tyrosine carboxypeptidase (TTCP) and tubulin tyrosine ligase (TTL), respectively. In terms of processing, acetylation of alpha chains at Lys-40 stabilizes microtubules and affects affinity and processivity of microtubule motors. This modification has a role in multiple cellular functions, ranging from cell motility, cell cycle progression or cell differentiation to intracellular trafficking and signaling.

The protein localises to the cytoplasm. The protein resides in the cytoskeleton. It catalyses the reaction GTP + H2O = GDP + phosphate + H(+). Its function is as follows. Tubulin is the major constituent of microtubules, a cylinder consisting of laterally associated linear protofilaments composed of alpha- and beta-tubulin heterodimers. Microtubules grow by the addition of GTP-tubulin dimers to the microtubule end, where a stabilizing cap forms. Below the cap, tubulin dimers are in GDP-bound state, owing to GTPase activity of alpha-tubulin. This Pisum sativum (Garden pea) protein is Tubulin alpha-1 chain (TUBA1).